The primary structure comprises 259 residues: Thiazole synthase (259 aa).

Residue Lys-95 is the Schiff-base intermediate with DXP of the active site. 1-deoxy-D-xylulose 5-phosphate-binding positions include Gly-156, 182-183 (AG), and 204-205 (NT).

Belongs to the ThiG family. In terms of assembly, homotetramer. Forms heterodimers with either ThiH or ThiS.

It is found in the cytoplasm. It catalyses the reaction [ThiS sulfur-carrier protein]-C-terminal-Gly-aminoethanethioate + 2-iminoacetate + 1-deoxy-D-xylulose 5-phosphate = [ThiS sulfur-carrier protein]-C-terminal Gly-Gly + 2-[(2R,5Z)-2-carboxy-4-methylthiazol-5(2H)-ylidene]ethyl phosphate + 2 H2O + H(+). Its pathway is cofactor biosynthesis; thiamine diphosphate biosynthesis. Its function is as follows. Catalyzes the rearrangement of 1-deoxy-D-xylulose 5-phosphate (DXP) to produce the thiazole phosphate moiety of thiamine. Sulfur is provided by the thiocarboxylate moiety of the carrier protein ThiS. In vitro, sulfur can be provided by H(2)S. The chain is Thiazole synthase from Proteus mirabilis (strain HI4320).